An 872-amino-acid chain; its full sequence is Sine oculis-binding protein homolog (872 aa).

A compositionally biased stretch (basic and acidic residues) spans 1–14; that stretch reads MAEMEKEGRPPENK. Residues 1–26 form a disordered region; that stretch reads MAEMEKEGRPPENKRSRKPAHPVKRE. 2 consecutive FCS-type zinc fingers follow at residues 142 to 180 and 216 to 256; these read DDVS…KCFA and FKNN…KCLN. Disordered stretches follow at residues 308-354, 411-484, and 550-619; these read RRKA…KSMP, FIRG…PGAP, and KPPN…GRSE. Over residues 319 to 344 the composition is skewed to polar residues; that stretch reads GQSQGPGPSASTTVSPSDTANCSVTK. The segment covering 417–433 has biased composition (low complexity); that stretch reads HHASNPNSPLSNPMLPG. Residues 460-484 are compositionally biased toward pro residues; the sequence is IHPPSTPTMPGNPPGLLPPPPPGAP. The short motif at 620–624 is the SUMO interaction motif 1 (SIM); mediates the binding to polysumoylated substrates element; it reads VVDLT. At Ser629 the chain carries Phosphoserine. Positions 651–655 match the SUMO interaction motif 2 (SIM); mediates the binding to polysumoylated substrates motif; it reads VIDLT. Residue Lys675 forms a Glycyl lysine isopeptide (Lys-Gly) (interchain with G-Cter in SUMO2) linkage. Position 697 is a phosphoserine (Ser697). The segment at 728–770 is disordered; sequence AAEGAKGAEPPPEQPPPPPPPPPAPPKKLLSPEEPAVSELESV. A compositionally biased stretch (pro residues) spans 736-753; that stretch reads EPPPEQPPPPPPPPPAPP.

This sequence belongs to the SOBP family. Interacts (via SIM domains) with SUMO1 and SUMO2.

Its function is as follows. Implicated in development of the cochlea. This chain is Sine oculis-binding protein homolog, found in Bos taurus (Bovine).